The sequence spans 292 residues: Protein/nucleic acid deglycase HchA (292 aa).

The span at 1–12 (MSQDVNELSKQP) shows a compositional bias: polar residues. The interval 1–23 (MSQDVNELSKQPTPDKAEDNAFF) is disordered. Residue C190 is the Nucleophile of the active site.

It belongs to the peptidase C56 family. HchA subfamily.

Its subcellular location is the cytoplasm. The enzyme catalyses N(omega)-(1-hydroxy-2-oxopropyl)-L-arginyl-[protein] + H2O = lactate + L-arginyl-[protein] + H(+). It catalyses the reaction N(6)-(1-hydroxy-2-oxopropyl)-L-lysyl-[protein] + H2O = lactate + L-lysyl-[protein] + H(+). It carries out the reaction S-(1-hydroxy-2-oxopropyl)-L-cysteinyl-[protein] + H2O = lactate + L-cysteinyl-[protein] + H(+). The catalysed reaction is N(omega)-(1-hydroxy-2-oxoethyl)-L-arginyl-[protein] + H2O = L-arginyl-[protein] + glycolate + H(+). The enzyme catalyses N(6)-(1-hydroxy-2-oxoethyl)-L-lysyl-[protein] + H2O = glycolate + L-lysyl-[protein] + H(+). It catalyses the reaction S-(1-hydroxy-2-oxoethyl)-L-cysteinyl-[protein] + H2O = glycolate + L-cysteinyl-[protein] + H(+). It carries out the reaction N(2)-(1-hydroxy-2-oxopropyl)-dGTP + H2O = lactate + dGTP + H(+). The catalysed reaction is N(2)-(1-hydroxy-2-oxopropyl)-GTP + H2O = lactate + GTP + H(+). The enzyme catalyses N(2)-(1-hydroxy-2-oxopropyl)-GDP + H2O = lactate + GDP + H(+). It catalyses the reaction N(2)-(1-hydroxy-2-oxopropyl)-GMP + H2O = lactate + GMP + H(+). It carries out the reaction N(2)-(1-hydroxy-2-oxoethyl)-dGTP + H2O = dGTP + glycolate + H(+). The catalysed reaction is N(2)-(1-hydroxy-2-oxoethyl)-GTP + H2O = glycolate + GTP + H(+). The enzyme catalyses N(2)-(1-hydroxy-2-oxoethyl)-GDP + H2O = glycolate + GDP + H(+). It catalyses the reaction N(2)-(1-hydroxy-2-oxoethyl)-GMP + H2O = glycolate + GMP + H(+). It carries out the reaction an N(2)-(1-hydroxy-2-oxopropyl)-guanosine in RNA + H2O = a guanosine in RNA + lactate + H(+). The catalysed reaction is an N(2)-(1-hydroxy-2-oxopropyl)-2'-deoxyguanosine in DNA + H2O = a 2'-deoxyguanosine in DNA + lactate + H(+). The enzyme catalyses an N(2)-(1-hydroxy-2-oxoethyl)-guanosine in RNA + H2O = a guanosine in RNA + glycolate + H(+). It catalyses the reaction an N(2)-(1-hydroxy-2-oxoethyl)-2'-deoxyguanosine in DNA + H2O = a 2'-deoxyguanosine in DNA + glycolate + H(+). Protein and nucleotide deglycase that catalyzes the deglycation of the Maillard adducts formed between amino groups of proteins or nucleotides and reactive carbonyl groups of glyoxals. Thus, functions as a protein deglycase that repairs methylglyoxal- and glyoxal-glycated proteins, and releases repaired proteins and lactate or glycolate, respectively. Deglycates cysteine, arginine and lysine residues in proteins, and thus reactivates these proteins by reversing glycation by glyoxals. Acts on early glycation intermediates (hemithioacetals and aminocarbinols), preventing the formation of Schiff bases and advanced glycation endproducts (AGE). Also functions as a nucleotide deglycase able to repair glycated guanine in the free nucleotide pool (GTP, GDP, GMP, dGTP) and in DNA and RNA. Is thus involved in a major nucleotide repair system named guanine glycation repair (GG repair), dedicated to reversing methylglyoxal and glyoxal damage via nucleotide sanitization and direct nucleic acid repair. Plays an important role in protecting cells from carbonyl stress. The chain is Protein/nucleic acid deglycase HchA from Staphylococcus aureus (strain bovine RF122 / ET3-1).